A 376-amino-acid polypeptide reads, in one-letter code: Lipoyl synthase, mitochondrial (376 aa).

[4Fe-4S] cluster contacts are provided by Cys102, Cys107, Cys113, Cys133, Cys137, Cys140, and Ser348. The Radical SAM core domain occupies 116–337 (GGEDKTATAT…EEVGGEMGFA (222 aa)).

Belongs to the radical SAM superfamily. Lipoyl synthase family. It depends on [4Fe-4S] cluster as a cofactor.

The protein localises to the mitochondrion. It carries out the reaction [[Fe-S] cluster scaffold protein carrying a second [4Fe-4S](2+) cluster] + N(6)-octanoyl-L-lysyl-[protein] + 2 oxidized [2Fe-2S]-[ferredoxin] + 2 S-adenosyl-L-methionine + 4 H(+) = [[Fe-S] cluster scaffold protein] + N(6)-[(R)-dihydrolipoyl]-L-lysyl-[protein] + 4 Fe(3+) + 2 hydrogen sulfide + 2 5'-deoxyadenosine + 2 L-methionine + 2 reduced [2Fe-2S]-[ferredoxin]. The protein operates within protein modification; protein lipoylation via endogenous pathway; protein N(6)-(lipoyl)lysine from octanoyl-[acyl-carrier-protein]: step 2/2. Catalyzes the radical-mediated insertion of two sulfur atoms into the C-6 and C-8 positions of the octanoyl moiety bound to the lipoyl domains of lipoate-dependent enzymes, thereby converting the octanoylated domains into lipoylated derivatives. The protein is Lipoyl synthase, mitochondrial of Branchiostoma floridae (Florida lancelet).